The chain runs to 242 residues: Octanoyltransferase (242 aa).

The 176-residue stretch at 31–206 (SQTTDEIWFL…LFLKNFGYNQ (176 aa)) folds into the BPL/LPL catalytic domain. Residues 70–77 (RGGQVTYH), 137–139 (SIG), and 150–152 (GLA) each bind substrate. Catalysis depends on Cys-168, which acts as the Acyl-thioester intermediate.

Belongs to the LipB family.

It localises to the cytoplasm. It catalyses the reaction octanoyl-[ACP] + L-lysyl-[protein] = N(6)-octanoyl-L-lysyl-[protein] + holo-[ACP] + H(+). It functions in the pathway protein modification; protein lipoylation via endogenous pathway; protein N(6)-(lipoyl)lysine from octanoyl-[acyl-carrier-protein]: step 1/2. Functionally, catalyzes the transfer of endogenously produced octanoic acid from octanoyl-acyl-carrier-protein onto the lipoyl domains of lipoate-dependent enzymes. Lipoyl-ACP can also act as a substrate although octanoyl-ACP is likely to be the physiological substrate. This Coxiella burnetii (strain CbuK_Q154) (Coxiella burnetii (strain Q154)) protein is Octanoyltransferase.